Here is a 315-residue protein sequence, read N- to C-terminus: Homoserine kinase (315 aa).

97–107 (PPARGLGSSAT) contributes to the ATP binding site.

Belongs to the GHMP kinase family. Homoserine kinase subfamily.

It localises to the cytoplasm. The catalysed reaction is L-homoserine + ATP = O-phospho-L-homoserine + ADP + H(+). It participates in amino-acid biosynthesis; L-threonine biosynthesis; L-threonine from L-aspartate: step 4/5. Its function is as follows. Catalyzes the ATP-dependent phosphorylation of L-homoserine to L-homoserine phosphate. The protein is Homoserine kinase of Prochlorococcus marinus (strain MIT 9515).